A 348-amino-acid chain; its full sequence is Endoplasmic reticulum junction formation protein lunapark-A (348 aa).

Topologically, residues 1-43 are cytoplasmic; it reads MSVFCLQAKPTTVEILEGIDKDIQILEDYSVKYQRQMKAVVGR. The helical transmembrane segment at 44–64 threads the bilayer; sequence LLLYSILLYLMAGVVVYSWYL. The Lumenal portion of the chain corresponds to 65-67; that stretch reads PEQ. A helical membrane pass occupies residues 68 to 88; it reads LMGRLVLGLPFLLFPLLVWIL. Over 89 to 348 the chain is Cytoplasmic; the sequence is RKVLILFFAR…EEDKQSDSGD (260 aa). Residues 105–126 adopt a coiled-coil conformation; that stretch reads FKLEDLKAQKRKILEDVMETET. Residues 142-211 are disordered; sequence KKKTDFDSTP…HSAPGGPPER (70 aa). A C4-type; plays a role in ER morphology zinc finger spans residues 277 to 302; that stretch reads CQQCLSHNGMALKEEFEYVAFRCAYC. The interval 313–348 is disordered; the sequence is PQAPRLPETAGEPKLPCDLNSSSCAAEEDKQSDSGD. Positions 339-348 are enriched in basic and acidic residues; the sequence is EEDKQSDSGD.

Belongs to the lunapark family. As to quaternary structure, homodimer; homodimerization requires the C4-type zinc finger motif and decreases during mitosis in a phosphorylation-dependent manner. Phosphorylated. Phosphorylation occurs during interphase. Phosphorylation also occurs during mitosis; these phosphorylations reduce both its homodimerization and the ER three-way tubular junction formation.

The protein resides in the endoplasmic reticulum membrane. In terms of biological role, endoplasmic reticulum (ER)-shaping membrane protein that plays a role in determining ER morphology. Involved in the stabilization of nascent three-way ER tubular junctions within the ER network. May also play a role as a curvature-stabilizing protein within three-way ER tubular junction network. In Takifugu rubripes (Japanese pufferfish), this protein is Endoplasmic reticulum junction formation protein lunapark-A (lnpka).